The chain runs to 343 residues: MAKRQLNRRQNWRIEKIQGERAARAAKRESATLETLEGGDLGPEQTGLVIAHFGVQVEVEAQEGEASGQVFRCHLRANLPALVTGDRVVWRAGNQGIGVIVAQLPRTTELRRPDSRGQLKPVAANVDLIVIVFAPMPEPHANLIDRYLVAAEHAGIRPLLLLNKADLIDEQNAPALNALLAVYRTLGYPVLEVSAHHGDGMQTLQSQLDGHISVFVGQSGVGKSSLVNSLLPETDTRVGPLSEVSGQGTHTTTTARLFHFPRGGDLIDSPGIREFGLGHVSRADVEAGFIEFNDLIGTCRFRDCKHDREPGCALLKGLEDGRVQQQRMNSYRSIIASLPQDSY.

A CP-type G domain is found at 116–275; the sequence is RGQLKPVAAN…LIDSPGIREF (160 aa). Residues 163–166 and 217–225 contribute to the GTP site; these read NKAD and GQSGVGKSS. Zn(2+)-binding residues include Cys299, Cys304, His306, and Cys312.

This sequence belongs to the TRAFAC class YlqF/YawG GTPase family. RsgA subfamily. In terms of assembly, monomer. Associates with 30S ribosomal subunit, binds 16S rRNA. The cofactor is Zn(2+).

It is found in the cytoplasm. One of several proteins that assist in the late maturation steps of the functional core of the 30S ribosomal subunit. Helps release RbfA from mature subunits. May play a role in the assembly of ribosomal proteins into the subunit. Circularly permuted GTPase that catalyzes slow GTP hydrolysis, GTPase activity is stimulated by the 30S ribosomal subunit. The polypeptide is Small ribosomal subunit biogenesis GTPase RsgA (Pseudomonas savastanoi pv. phaseolicola (strain 1448A / Race 6) (Pseudomonas syringae pv. phaseolicola (strain 1448A / Race 6))).